The sequence spans 142 residues: U1 small nuclear ribonucleoprotein C (142 aa).

A Matrin-type zinc finger spans residues 4 to 36; the sequence is YYCDYCDTFLTHDSPSVRKTHNGGRKHKDNVRM.

This sequence belongs to the U1 small nuclear ribonucleoprotein C family. As to quaternary structure, U1 snRNP is composed of the 7 core Sm proteins B/B', D1, D2, D3, E, F and G that assemble in a heptameric protein ring on the Sm site of the small nuclear RNA to form the core snRNP, and at least 3 U1 snRNP-specific proteins U1-70K, U1-A and U1-C. U1-C interacts with U1 snRNA and the 5' splice-site region of the pre-mRNA.

Its subcellular location is the nucleus. Component of the spliceosomal U1 snRNP, which is essential for recognition of the pre-mRNA 5' splice-site and the subsequent assembly of the spliceosome. U1-C is directly involved in initial 5' splice-site recognition for both constitutive and regulated alternative splicing. The interaction with the 5' splice-site seems to precede base-pairing between the pre-mRNA and the U1 snRNA. Stimulates commitment or early (E) complex formation by stabilizing the base pairing of the 5' end of the U1 snRNA and the 5' splice-site region. The sequence is that of U1 small nuclear ribonucleoprotein C from Caenorhabditis elegans.